Here is a 150-residue protein sequence, read N- to C-terminus: MTAKSRILVLNGPNLNLLGLREPTHYGSQTLEQIVATLRDQAQKADIELEHLQSNREYELIEAIHQAFGKVDFIIINPAAFTHTSVALRDALLGVAIPFIEVHLSNVHAREPFRHHSYLSDKAQGVICGLGAQGYEFALSAAIRALQAKQ.

The Proton acceptor role is filled by Y26. N77, H83, and D90 together coordinate substrate. H103 (proton donor) is an active-site residue. Residues 104-105 (LS) and R114 contribute to the substrate site.

It belongs to the type-II 3-dehydroquinase family. Homododecamer.

It catalyses the reaction 3-dehydroquinate = 3-dehydroshikimate + H2O. It participates in metabolic intermediate biosynthesis; chorismate biosynthesis; chorismate from D-erythrose 4-phosphate and phosphoenolpyruvate: step 3/7. Catalyzes a trans-dehydration via an enolate intermediate. The sequence is that of 3-dehydroquinate dehydratase from Vibrio cholerae serotype O1 (strain ATCC 39541 / Classical Ogawa 395 / O395).